Here is a 1619-residue protein sequence, read N- to C-terminus: ATP-dependent helicase ULS1 (1619 aa).

The SUMO interacting motif; type a 1 motif lies at 7-10; it reads IDLT. Positions 86–102 are enriched in polar residues; the sequence is STFNNEKSSNEVKQQQV. 4 disordered regions span residues 86-123, 200-279, 347-371, and 429-450; these read STFN…SSPS, NNKP…VESS, PILP…NSSI, and SGSN…SVLQ. The span at 103 to 118 shows a compositional bias: basic and acidic residues; that stretch reads LKEETMGSSNDEKKTQ. Position 121 is a phosphoserine (serine 121). Residues 200-210 are compositionally biased toward polar residues; it reads NNKPSQQQFSD. The span at 211–226 shows a compositional bias: basic and acidic residues; sequence PETKDNSLKSENKDQI. Composition is skewed to polar residues over residues 242 to 259 and 269 to 279; these read SAFQ…TIPN and LPSNLSSVESS. Positions 353–366 are enriched in basic and acidic residues; that stretch reads NMDHTTHNSHDSEQ. An SUMO interacting motif; type b 1 motif is present at residues 371 to 378; that stretch reads IIILSDED. An SUMO interacting motif; type a 2 motif is present at residues 470–473; that stretch reads LDTL. Residues 543–550 carry the SUMO interacting motif; type b 2 motif; sequence ILVDEAEN. A Helicase ATP-binding domain is found at 956-1157; the sequence is QVENSAKKGG…YSLIRFLRIP (202 aa). Residue 969–976 participates in ATP binding; sequence DDMGLGKT. Residues 1330 to 1386 form an RING-type zinc finger; sequence CFWCMEQLEPEAMSVLTGCGHLICDTCIEPFIEESSMLPQAKKTKGGAFAIPCKDCQ. The region spanning 1447–1606 is the Helicase C-terminal domain; the sequence is QCIQVIQRVF…GKIKEVNSLG (160 aa).

Belongs to the SNF2/RAD54 helicase family. In terms of assembly, interacts with CDC3, CDC11, EBP2, SIR4, UBC4 and SUMO/SMT3.

It is found in the nucleus. Functionally, ATP-dependent helicase involved mating type switching and in silencing interference through its interaction with the silencing regulator SIR4. Cooperates with UBC4 and UBC5 to mediate ubiquitination of SUMO conjugates. The polypeptide is ATP-dependent helicase ULS1 (ULS1) (Saccharomyces cerevisiae (strain ATCC 204508 / S288c) (Baker's yeast)).